We begin with the raw amino-acid sequence, 1853 residues long: MRKVISMLLVVAMLTTIFAAMIPQTVSAATMTVEIGKVTAAVGSKVEIPITLKGVPSKGMANCDFVLGYDPNVLEVTEVKPGSIIKDPDPSKSFDSAIYPDRKMIVFLFAEDSGRGTYAITQDGVFATIVATVKSAAAAPITLLEVGAFADNDLVEISTTFVAGGVNLGSSVPTTQPNVPSDGVVVEIGKVTGSVGTTVEIPVYFRGVPSKGIANCDFVFRYDPNVLEIIGIDPGDIIVDPNPTKSFDTAIYPDRKIIVFLFAEDSGTGAYAITKDGVFAKIRATVKSSAPGYITFDEVGGFADNDLVEQKVSFIDGGVNVGNATPTKGATPTNTATPTKSATATPTRPSVPTNTPTNTPANTPVSGNLKVEFYNSNPSDTTNSINPQFKVTNTGSSAIDLSKLTLRYYYTVDGQKDQTFWCDHAAIIGSNGSYNGITSNVKGTFVKMSSSTNNADTYLEISFTGGTLEPGAHVQIQGRFAKNDWSNYTQSNDYSFKSASQFVEWDQVTAYLNGVLVWGKEPGGSVVPSTQPVTTPPATTKPPATTKPPATTIPPSDDPNAIKIKVDTVNAKPGDTVNIPVRFSGIPSKGIANCDFVYSYDPNVLEIIEIKPGELIVDPNPDKSFDTAVYPDRKIIVFLFAEDSGTGAYAITKDGVFATIVAKVKSGAPNGLSVIKFVEVGGFANNDLVEQRTQFFDGGVNVGDTTVPTTPTTPVTTPTDDSNAVRIKVDTVNAKPGDTVRIPVRFSGIPSKGIANCDFVYSYDPNVLEIIEIEPGDIIVDPNPDKSFDTAVYPDRKIIVFLFAEDSGTGAYAITKDGVFATIVAKVKSGAPNGLSVIKFVEVGGFANNDLVEQKTQFFDGGVNVGDTTEPATPTTPVTTPTTTDDLDAVRIKVDTVNAKPGDTVRIPVRFSGIPSKGIANCDFVYSYDPNVLEIIEIEPGDIIVDPNPDKSFDTAVYPDRKIIVFLFAEDSGTGAYAITKDGVFATIVAKVKSGAPNGLSVIKFVEVGGFANNDLVEQKTQFFDGGVNVGDTTEPATPTTPVTTPTTTDDLDAVRIKVDTVNAKPGDTVRIPVRFSGIPSKGIANCDFVYSYDPNVLEIIEIEPGDIIVDPNPDKSFDTAVYPDRKIIVFLFAEDSGTGAYAITKDGVFATIVAKVKEGAPNGLSVIKFVEVGGFANNDLVEQKTQFFDGGVNVGDTTEPATPTTPVTTPTTTDDLDAVRIKVDTVNAKPGDTVRIPVRFSGIPSKGIANCDFVYSYDPNVLEIIEIEPGELIVDPNPTKSFDTAVYPDRKMIVFLFAEDSGTGAYAITEDGVFATIVAKVKSGAPNGLSVIKFVEVGGFANNDLVEQKTQFFDGGVNVGDTTEPATPTTPVTTPTTTDDLDAVRIKVDTVNAKPGDTVRIPVRFSGIPSKGIANCDFVYSYDPNVLEIIEIEPGDIIVDPNPDKSFDTAVYPDRKIIVFLFAEDSGTGAYAITKDGVFATIVAKVKEGAPNGLSVIKFVEVGGFANNDLVEQKTQFFDGGVNVGDTTVPTTSPTTTPPEPTITPNKLTLKIGRAEGRPGDTVEIPVNLYGVPQKGIASGDFVVSYDPNVLEIIEIEPGELIVDPNPTKSFDTAVYPDRKMIVFLFAEDSGTGAYAITEDGVFATIVAKVKEGAPEGFSAIEISEFGAFADNDLVEVETDLINGGVLVTNKPVIEGYKVSGYILPDFSFDATVAPLVKAGFKVEIVGTELYAVTDANGYFEITGVPANASGYTLKISRATYLDRVIANVVVTGDTSVSTSQAPIMMWVGDIVKDNSINLLDVAEVIRCFNATKGSANYVEELDINRNGAINMQDIMIVHKHFGATSSDYDAQ.

The N-terminal stretch at 1–28 (MRKVISMLLVVAMLTTIFAAMIPQTVSA) is a signal peptide. Cohesin domains follow at residues 29 to 182 (ATMT…VPSD) and 183 to 322 (GVVV…VNVG). 2 linker (Pro/Thr-rich) regions span residues 323 to 363 (NATP…PANT) and 523 to 559 (GGSVVPSTQPVTTPPATTKPPATTKPPATTIPPSDDP). Residues 323 to 364 (NATPTKGATPTNTATPTKSATATPTRPSVPTNTPTNTPANTP) show a composition bias toward low complexity. 2 disordered regions span residues 323-367 (NATP…PVSG) and 525-559 (SVVPSTQPVTTPPATTKPPATTKPPATTIPPSDDP). One can recognise a CBM3 domain in the interval 365–523 (VSGNLKVEFY…GVLVWGKEPG (159 aa)). A compositionally biased stretch (low complexity) spans 525 to 555 (SVVPSTQPVTTPPATTKPPATTKPPATTIPP). 7 consecutive Cohesin domains span residues 560-704 (NAIK…NVGD), 724-866 (AVRI…VNVG), 889-1031 (AVRI…VNVG), 1054-1196 (AVRI…VNVG), 1219-1361 (AVRI…VNVG), 1384-1526 (AVRI…VNVG), and 1548-1690 (KLTL…VLVT). The 68-residue stretch at 1785-1852 (IMMWVGDIVK…FGATSSDYDA (68 aa)) folds into the Dockerin domain.

Post-translationally, O-glycosylated on most but not all Thr residues of the linker units. The reducing sugar is galactopyranose.

It is found in the secreted. Functionally, acts as a scaffolding protein in the cellulosome. It promotes binding of cellulose to the catalytic domains of the cellulolytic enzymes. This is Cellulosomal-scaffolding protein A (cipA) from Acetivibrio thermocellus (strain ATCC 27405 / DSM 1237 / JCM 9322 / NBRC 103400 / NCIMB 10682 / NRRL B-4536 / VPI 7372) (Clostridium thermocellum).